Here is a 1143-residue protein sequence, read N- to C-terminus: Condensin-2 complex subunit G2 (1143 aa).

A Phosphoserine modification is found at Ser30. One copy of the HEAT repeat lies at 460-498; the sequence is LLPALRYSLHDNSEKVRVAFVDMLLKIKAVRAAKFWKIC. A phosphothreonine mark is found at Thr805 and Thr1119.

As to quaternary structure, component of the condensin-2 complex, which contains the SMC2 and SMC4 heterodimer, and 3 non SMC subunits that probably regulate the complex: NCAPH2, NCAPD3 and NCAPG2.

The protein resides in the nucleus. Its function is as follows. Regulatory subunit of the condensin-2 complex, a complex which establishes mitotic chromosome architecture and is involved in physical rigidity of the chromatid axis. The protein is Condensin-2 complex subunit G2 (NCAPG2) of Homo sapiens (Human).